Reading from the N-terminus, the 793-residue chain is MQVLVTLWCLICTCLVLPVAAKKRTLTASSLVTCMENSQLSANSFDVSFSPDDRSLHYDLDMTTQIDSYIYAYVDVYAYGFKIITENFDVCSMGWKQFCPVHPGNIQIDSIEYIAQKYVKMIPGIAYQVPDIDAYVRLNIYNNVSENLACIQVFFSNGKTVSQIGVKWVTAVIAGIGLLTSAVLSTFGNSTAASHISANTMSLFLYFQSVAVVAMQHVDSVPPIAAAWSENLAWSMGLIRITFMQKIFRWYVEATGGSASLYLTATTMSVLTQRGLDYLKNTSVYKRAENVLYGNSNTLIFRGIKRMGYRMKIENTAIVCTGFTFFVLCGYFLAGFIMACKYSIELCIRCGWMRSDRFYQFRKNWRSVLKGSLLRYIYIGFTQLTILSFWEFTERDSAGVIVIACLFIVLSCGLMAWAAYRTIFFASKSVEMYNNPAALLYGDEYVLNKYGFFYTMFNAKHYWWNALLTTYILVKALFVGFAQASGKTQALAIFIIDLAYFVAIIRYKPYLDRPTNIVNIFICTVTLVNSFLFMFFSNLFNQKYAVSAIMGWVFFIMNAAFSLLLLLMILAFTTIILFSKNPDSRFKPAKDDRASFQKHAIPHEGALNKSVANELMALGNVAKDHTENWEYELKSQEGKSEDNLFGVEYDDEKTGTNSENAESSSKETTRPTFSEKVLRSLSIKRNKSKLGSFKRSAPDKITQQEVSPDRASSSPNSKSYPGVSHTRQESEANNGLINAYEDEQFSLMEPSILEDAASSTQMHAMPARDLSLSSVANAQDVTKKANILDPDYL.

Positions 1 to 21 are cleaved as a signal peptide; it reads MQVLVTLWCLICTCLVLPVAA. Residues 22-163 are Lumenal-facing; sequence KKRTLTASSL…FFSNGKTVSQ (142 aa). Asparagine 143 carries N-linked (GlcNAc...) asparagine glycosylation. The helical transmembrane segment at 164 to 184 threads the bilayer; the sequence is IGVKWVTAVIAGIGLLTSAVL. The Cytoplasmic portion of the chain corresponds to 185 to 194; it reads STFGNSTAAS. A helical transmembrane segment spans residues 195-215; it reads HISANTMSLFLYFQSVAVVAM. Topologically, residues 216-223 are lumenal; the sequence is QHVDSVPP. Residues 224–244 traverse the membrane as a helical segment; the sequence is IAAAWSENLAWSMGLIRITFM. Residues 245 to 249 are Cytoplasmic-facing; it reads QKIFR. A helical transmembrane segment spans residues 250-272; sequence WYVEATGGSASLYLTATTMSVLT. At 273–317 the chain is on the lumenal side; sequence QRGLDYLKNTSVYKRAENVLYGNSNTLIFRGIKRMGYRMKIENTA. An N-linked (GlcNAc...) asparagine glycan is attached at asparagine 281. Residues 318–338 traverse the membrane as a helical segment; the sequence is IVCTGFTFFVLCGYFLAGFIM. The Cytoplasmic portion of the chain corresponds to 339–372; the sequence is ACKYSIELCIRCGWMRSDRFYQFRKNWRSVLKGS. Residues 373 to 393 traverse the membrane as a helical segment; sequence LLRYIYIGFTQLTILSFWEFT. The Lumenal portion of the chain corresponds to 394-397; sequence ERDS. Residues 398 to 418 traverse the membrane as a helical segment; that stretch reads AGVIVIACLFIVLSCGLMAWA. The Cytoplasmic portion of the chain corresponds to 419–461; sequence AYRTIFFASKSVEMYNNPAALLYGDEYVLNKYGFFYTMFNAKH. Residues 462 to 482 traverse the membrane as a helical segment; sequence YWWNALLTTYILVKALFVGFA. Over 483–484 the chain is Lumenal; sequence QA. The chain crosses the membrane as a helical span at residues 485–505; that stretch reads SGKTQALAIFIIDLAYFVAII. Residues 506–516 are Cytoplasmic-facing; the sequence is RYKPYLDRPTN. The chain crosses the membrane as a helical span at residues 517–537; that stretch reads IVNIFICTVTLVNSFLFMFFS. At 538-551 the chain is on the lumenal side; the sequence is NLFNQKYAVSAIMG. The helical transmembrane segment at 552-572 threads the bilayer; sequence WVFFIMNAAFSLLLLLMILAF. Residues 573-793 lie on the Cytoplasmic side of the membrane; that stretch reads TTIILFSKNP…KANILDPDYL (221 aa). Serine 610 is modified (phosphoserine). Position 626 is a phosphothreonine (threonine 626). Disordered stretches follow at residues 649 to 674 and 689 to 731; these read YDDE…PTFS and KLGS…QESE. A compositionally biased stretch (polar residues) spans 701-719; that stretch reads ITQQEVSPDRASSSPNSKS. 2 positions are modified to phosphoserine: serine 771 and serine 774.

Belongs to the transient receptor potential (TRP) ion channel family.

It is found in the endoplasmic reticulum membrane. Functionally, may be responsible for the transport of FAD into the endoplasmic reticulum lumen, where it is required for oxidative protein folding. This Saccharomyces cerevisiae (strain ATCC 204508 / S288c) (Baker's yeast) protein is Flavin carrier protein 1 (FLC1).